The primary structure comprises 457 residues: Acetylcholine receptor subunit alpha (457 aa).

The N-terminal stretch at 1-20 is a signal peptide; it reads MEPWPLLLLFSLCSAGLVLG. The Extracellular segment spans residues 21–232; the sequence is SEHETRLVAK…YHFVMQRLPL (212 aa). Intrachain disulfides connect cysteine 148-cysteine 162 and cysteine 212-cysteine 213. A glycan (N-linked (GlcNAc...) asparagine) is linked at asparagine 161. A helical membrane pass occupies residues 233-253; it reads YFIVNVIIPCLLFSFLTGLVF. Over 254-264 the chain is Cytoplasmic; that stretch reads YLPTDSGEKMT. A helical membrane pass occupies residues 265–285; the sequence is LSISVLLSLTVFLLVIVELIP. Topologically, residues 286-296 are extracellular; that stretch reads STSSAVPLIGK. The helical transmembrane segment at 297 to 317 threads the bilayer; it reads YMLFTMVFVIASIIITVIVIN. Residues 318 to 427 are Cytoplasmic-facing; it reads THHRSPSTHV…EWKYVAMVMD (110 aa). A helical membrane pass occupies residues 428–448; sequence HILLGVFMLVCIIGTLAVFAG. Topologically, residues 449 to 457 are extracellular; it reads RLIELNQQG.

Belongs to the ligand-gated ion channel (TC 1.A.9) family. Acetylcholine receptor (TC 1.A.9.1) subfamily. Alpha-1/CHRNA1 sub-subfamily. As to quaternary structure, one of the alpha chains that assemble within the acetylcholine receptor, a pentamer of two alpha chains, a beta, a delta, and a gamma (in immature muscle) or epsilon (in mature muscle) chains. The muscle heteropentamer composed of alpha-1, beta-1, delta, epsilon subunits interacts with the alpha-conotoxin ImII. In terms of assembly, is able to interact with other subunits of the acetylcholine receptor but is not assembled into functional acetylcholine-gated cation-selective channels. In terms of tissue distribution, isoform 1 is only expressed in skeletal muscle. Isoform 2 is constitutively expressed in skeletal muscle, brain, heart, kidney, liver, lung and thymus.

It is found in the postsynaptic cell membrane. It localises to the cell membrane. It catalyses the reaction K(+)(in) = K(+)(out). The enzyme catalyses Na(+)(in) = Na(+)(out). Upon acetylcholine binding, the AChR responds by an extensive change in conformation that affects all subunits and leads to opening of an ion-conducting channel across the plasma membrane. In terms of biological role, non functional acetylcholine receptor alpha subunit which is not integrated into functional acetylcholine-gated cation-selective channels. The chain is Acetylcholine receptor subunit alpha from Homo sapiens (Human).